We begin with the raw amino-acid sequence, 117 residues long: UPF0102 protein Rsph17029_0461 (117 aa).

This sequence belongs to the UPF0102 family.

This is UPF0102 protein Rsph17029_0461 from Cereibacter sphaeroides (strain ATCC 17029 / ATH 2.4.9) (Rhodobacter sphaeroides).